Consider the following 72-residue polypeptide: Large ribosomal subunit protein uL29 (72 aa).

It belongs to the universal ribosomal protein uL29 family.

The chain is Large ribosomal subunit protein uL29 from Prochlorococcus marinus (strain AS9601).